We begin with the raw amino-acid sequence, 425 residues long: Enolase (425 aa).

(2R)-2-phosphoglycerate is bound at residue Q170. The active-site Proton donor is the E214. Mg(2+) is bound by residues D250, E291, and D317. (2R)-2-phosphoglycerate-binding residues include K342, R371, S372, and K393. Catalysis depends on K342, which acts as the Proton acceptor.

It belongs to the enolase family. Mg(2+) serves as cofactor.

It localises to the cytoplasm. The protein resides in the secreted. Its subcellular location is the cell surface. It carries out the reaction (2R)-2-phosphoglycerate = phosphoenolpyruvate + H2O. It functions in the pathway carbohydrate degradation; glycolysis; pyruvate from D-glyceraldehyde 3-phosphate: step 4/5. In terms of biological role, catalyzes the reversible conversion of 2-phosphoglycerate (2-PG) into phosphoenolpyruvate (PEP). It is essential for the degradation of carbohydrates via glycolysis. This is Enolase from Methanococcoides burtonii (strain DSM 6242 / NBRC 107633 / OCM 468 / ACE-M).